Consider the following 347-residue polypeptide: Protein RecA (347 aa).

65-72 (GPESSGKT) provides a ligand contact to ATP.

It belongs to the RecA family.

The protein localises to the cytoplasm. Can catalyze the hydrolysis of ATP in the presence of single-stranded DNA, the ATP-dependent uptake of single-stranded DNA by duplex DNA, and the ATP-dependent hybridization of homologous single-stranded DNAs. It interacts with LexA causing its activation and leading to its autocatalytic cleavage. The polypeptide is Protein RecA (Aliivibrio salmonicida (strain LFI1238) (Vibrio salmonicida (strain LFI1238))).